Consider the following 308-residue polypeptide: Cis-prenyltransferase 4, chloroplastic (308 aa).

A chloroplast-targeting transit peptide spans 1 to 45; the sequence is MAFSLQLQQIFVSYTRFCSQPKSITNPLISLKLPSIHPLAFAQNA. The active site involves Asp-84.

This sequence belongs to the UPP synthase family. It depends on Mg(2+) as a cofactor. In terms of tissue distribution, widely expressed.

The protein resides in the plastid. It localises to the chloroplast. Functionally, uses neryl diphosphate and geranyl diphosphate to catalyze the cis-prenyl chain elongation and produce polyprenyl diphosphate with a chain of 55 carbons. This is Cis-prenyltransferase 4, chloroplastic from Solanum lycopersicum (Tomato).